Reading from the N-terminus, the 345-residue chain is Protein CHROMOSOME TRANSMISSION FIDELITY 7 (345 aa).

The CCHH-type zinc-finger motif lies at 96–120 (RHCAECGAKYAPGDELDEKNHQSFH).

This sequence belongs to the acetyltransferase family. ECO subfamily. Autoacetylated. In terms of tissue distribution, expressed in roots, stems, leaves, young seedlings and flower buds. Detected in the embryo, but not in the endosperm.

The protein localises to the nucleus. Its subcellular location is the cytoplasm. In terms of biological role, acetyltransferase required for the establishment of sister chromatid cohesion. Involved in preservation of genome integrity and meiosis. Required for DNA repair and for the regulation of chromosome segregation during mitotic cell division. Knock-down mutants are extremely dwarf. Regulator of sister chromatid cohesion in meiosis which negatively regulates cohesin association with chromatin, acting as an antagonist of WAPL1 and WAPL2. The protein is Protein CHROMOSOME TRANSMISSION FIDELITY 7 of Arabidopsis thaliana (Mouse-ear cress).